The primary structure comprises 428 residues: Anaerobic glycerol-3-phosphate dehydrogenase subunit B (428 aa).

The protein belongs to the anaerobic G-3-P dehydrogenase subunit B family. As to quaternary structure, composed of a catalytic GlpA/B dimer and of membrane bound GlpC. It depends on FMN as a cofactor.

It carries out the reaction a quinone + sn-glycerol 3-phosphate = dihydroxyacetone phosphate + a quinol. The protein operates within polyol metabolism; glycerol degradation via glycerol kinase pathway; glycerone phosphate from sn-glycerol 3-phosphate (anaerobic route): step 1/1. Functionally, conversion of glycerol 3-phosphate to dihydroxyacetone. Uses fumarate or nitrate as electron acceptor. The chain is Anaerobic glycerol-3-phosphate dehydrogenase subunit B from Pasteurella multocida (strain Pm70).